The chain runs to 153 residues: 3-hydroxyacyl-[acyl-carrier-protein] dehydratase FabZ (153 aa).

His-54 is a catalytic residue.

The protein belongs to the thioester dehydratase family. FabZ subfamily.

It is found in the cytoplasm. The enzyme catalyses a (3R)-hydroxyacyl-[ACP] = a (2E)-enoyl-[ACP] + H2O. Functionally, involved in unsaturated fatty acids biosynthesis. Catalyzes the dehydration of short chain beta-hydroxyacyl-ACPs and long chain saturated and unsaturated beta-hydroxyacyl-ACPs. The chain is 3-hydroxyacyl-[acyl-carrier-protein] dehydratase FabZ from Shewanella loihica (strain ATCC BAA-1088 / PV-4).